The following is a 312-amino-acid chain: GDP-L-fucose synthase (312 aa).

An NADP(+)-binding site is contributed by 11 to 17; the sequence is GGRGMVG. The active-site Proton donor/acceptor is Tyr136. Residues Lys140 and His179 each contribute to the NADP(+) site. Lys187, Trp202, and Arg209 together coordinate substrate.

Belongs to the NAD(P)-dependent epimerase/dehydratase family. Fucose synthase subfamily.

The enzyme catalyses GDP-beta-L-fucose + NADP(+) = GDP-4-dehydro-alpha-D-rhamnose + NADPH + H(+). Its pathway is nucleotide-sugar biosynthesis; GDP-L-fucose biosynthesis via de novo pathway; GDP-L-fucose from GDP-alpha-D-mannose: step 2/2. In terms of biological role, catalyzes the two-step NADP-dependent conversion of GDP-4-dehydro-6-deoxy-D-mannose to GDP-fucose, involving an epimerase and a reductase reaction. The sequence is that of GDP-L-fucose synthase from Azorhizobium caulinodans (strain ATCC 43989 / DSM 5975 / JCM 20966 / LMG 6465 / NBRC 14845 / NCIMB 13405 / ORS 571).